Reading from the N-terminus, the 198-residue chain is CASP-like protein 2B1 (198 aa).

Topologically, residues 1-12 are cytoplasmic; sequence MAAAMGLERKAK. Residues 13–33 traverse the membrane as a helical segment; that stretch reads VAEVALRCAVCALAALAAALV. Residues 34-55 are Extracellular-facing; the sequence is GTGSQTRTFFSLEKKARFTDMK. The helical transmembrane segment at 56 to 76 threads the bilayer; that stretch reads ALVLLVAAHGAAAVYSLLQLA. The Cytoplasmic portion of the chain corresponds to 77-91; sequence RCAAAAAWKGGSNGG. A helical transmembrane segment spans residues 92 to 112; that stretch reads AAVVAWSVFSCDQAVAYALMA. The Extracellular segment spans residues 113 to 149; sequence ATAAALQSSVVGKRGQPELQWMPVCGLYGAFCRRVGE. The chain crosses the membrane as a helical span at residues 150–170; that stretch reads GLAAAVAAGLAAVLLAAVSAF. Residues 171 to 198 are Cytoplasmic-facing; the sequence is NLFRLYGGGGGGRKSSAGAVSGNGANTW.

The protein belongs to the Casparian strip membrane proteins (CASP) family. As to quaternary structure, homodimer and heterodimers.

It localises to the cell membrane. This Oryza sativa subsp. japonica (Rice) protein is CASP-like protein 2B1.